The primary structure comprises 68 residues: Beta-toxin Cl13 (68 aa).

The region spanning 1-66 is the LCN-type CS-alpha/beta domain; that stretch reads KEGYLVDYHT…VWPLPNKRCK (66 aa). Disulfide bonds link cysteine 12–cysteine 65, cysteine 16–cysteine 41, cysteine 25–cysteine 46, and cysteine 29–cysteine 48. A Lysine amide modification is found at lysine 66.

Belongs to the long (4 C-C) scorpion toxin superfamily. Sodium channel inhibitor family. Beta subfamily. In terms of tissue distribution, expressed by the venom gland.

Its subcellular location is the secreted. Beta toxins bind voltage-independently at site-4 of sodium channels (Nav) and shift the voltage of activation toward more negative potentials thereby affecting sodium channel activation and promoting spontaneous and repetitive firing. Inhibits sodium channels Nav1.4/SCN4A, Nav1.5/SCN5A and Nav1.6/SCN8A. Also has a weak inhibitory effect on Nav1.2/SCN2A. Is lethal to mice. The polypeptide is Beta-toxin Cl13 (Centruroides limpidus (Mexican scorpion)).